The primary structure comprises 900 residues: Serine-rich coiled-coil domain-containing protein 1 (900 aa).

2 disordered regions span residues 1–100 and 156–178; these read MGDS…HSNM and KSEG…QSTR. The span at 29–56 shows a compositional bias: low complexity; the sequence is LPSSPSSSNTVGVHSSSPSSTNSSSGST. Polar residues predominate over residues 81 to 100; the sequence is EPTNQNLSISNGAQPGHSNM. Positions 673 to 707 form a coiled coil; it reads MKDECSMLKLQLKEKDELISQLQEELGKVRHLQKA.

The protein belongs to the CCSER family.

In Homo sapiens (Human), this protein is Serine-rich coiled-coil domain-containing protein 1 (CCSER1).